Reading from the N-terminus, the 587-residue chain is Pyruvate decarboxylase 3 (587 aa).

Substrate is bound by residues Asp-48 and His-135. Residues 415-496 form a thiamine pyrophosphate binding region; sequence DSWFNCQKLR…FLINNGGYTI (82 aa). Mg(2+) contacts are provided by Asp-464, Asn-491, and Gly-493. Substrate is bound at residue Glu-497.

The protein belongs to the TPP enzyme family. Homotetramer. A metal cation is required as a cofactor. Requires thiamine diphosphate as cofactor.

It catalyses the reaction a 2-oxocarboxylate + H(+) = an aldehyde + CO2. The polypeptide is Pyruvate decarboxylase 3 (PDC3) (Oryza sativa subsp. japonica (Rice)).